A 232-amino-acid chain; its full sequence is Modulator of macroautophagy TMEM150B (232 aa).

At 1 to 6 (MWAWAL) the chain is on the cytoplasmic side. Residues 7-27 (LPVFLAVFGTVGLWAVYAIAV) form a helical membrane-spanning segment. Residues 28–50 (SNNSVNITIEFPYISTCGAYTPQ) lie on the Extracellular side of the membrane. N-linked (GlcNAc...) asparagine glycans are attached at residues asparagine 29 and asparagine 33. The chain crosses the membrane as a helical span at residues 51–71 (SCLFAQICNICCVLALWIVVI). Over 72–83 (RFQQIRDLGRSS) the chain is Cytoplasmic. The helical transmembrane segment at 84-104 (HLNTAGLVLGFISSIGISILG) threads the bilayer. Topologically, residues 105–115 (NFQQTIIQEVH) are extracellular. Residues 116 to 136 (LLGALMAFFLGLAYFWIQAFI) form a helical membrane-spanning segment. Residues 137–153 (TYFSPPSRDNKWLVPVR) lie on the Cytoplasmic side of the membrane. A helical transmembrane segment spans residues 154–174 (FVLCSQCTCMVICMFVLHSTG). The Extracellular segment spans residues 175–177 (FRS). Residues 178–198 (AAAICEWILVMCFFALFGVFA) form a helical membrane-spanning segment. The Cytoplasmic portion of the chain corresponds to 199 to 232 (AEFRHIDFHKLTVQKEGLKVANNDNVVWTVQDVQ).

Belongs to the DRAM/TMEM150 family.

It localises to the cell membrane. The protein resides in the endosome membrane. The protein localises to the cytoplasmic vesicle. It is found in the autophagosome membrane. Its function is as follows. Modulator of macroautophagy that causes accumulation of autophagosomes under basal conditions and enhances autophagic flux. Represses cell death and promotes long-term clonogenic survival of cells grown in the absence of glucose in a macroautophagy-independent manner. May have some role in extracellular matrix engulfment or growth factor receptor recycling, both of which can modulate cell survival. The polypeptide is Modulator of macroautophagy TMEM150B (Danio rerio (Zebrafish)).